The sequence spans 360 residues: Phosphoserine aminotransferase (360 aa).

Arg42 provides a ligand contact to L-glutamate. Trp102, Thr152, Asp171, and Gln194 together coordinate pyridoxal 5'-phosphate. An N6-(pyridoxal phosphate)lysine modification is found at Lys195. A pyridoxal 5'-phosphate-binding site is contributed by 237-238; it reads NT.

Belongs to the class-V pyridoxal-phosphate-dependent aminotransferase family. SerC subfamily. As to quaternary structure, homodimer. The cofactor is pyridoxal 5'-phosphate.

The protein localises to the cytoplasm. It catalyses the reaction O-phospho-L-serine + 2-oxoglutarate = 3-phosphooxypyruvate + L-glutamate. The catalysed reaction is 4-(phosphooxy)-L-threonine + 2-oxoglutarate = (R)-3-hydroxy-2-oxo-4-phosphooxybutanoate + L-glutamate. Its pathway is amino-acid biosynthesis; L-serine biosynthesis; L-serine from 3-phospho-D-glycerate: step 2/3. The protein operates within cofactor biosynthesis; pyridoxine 5'-phosphate biosynthesis; pyridoxine 5'-phosphate from D-erythrose 4-phosphate: step 3/5. Its function is as follows. Catalyzes the reversible conversion of 3-phosphohydroxypyruvate to phosphoserine and of 3-hydroxy-2-oxo-4-phosphonooxybutanoate to phosphohydroxythreonine. This chain is Phosphoserine aminotransferase, found in Coxiella burnetii (strain RSA 331 / Henzerling II).